Reading from the N-terminus, the 526-residue chain is Major facilitator superfamily domain-containing protein 4A (526 aa).

The next 12 membrane-spanning stretches (helical) occupy residues 21–41 (LTYW…GPTI), 55–75 (ITLV…IGGF), 84–104 (LSSL…IPLC), 107–127 (LLML…IDTI), 142–162 (VFLQ…PLIA), 215–235 (YAFW…FVLV), 297–317 (LSFF…DGIV), 341–361 (GYLT…AIPL), 377–397 (GVIV…FLFI), 401–421 (CLGL…EDIL), 430–450 (VLVT…GSVM), and 458–478 (FLLC…FLYF).

The protein belongs to the major facilitator superfamily.

It localises to the membrane. The sequence is that of Major facilitator superfamily domain-containing protein 4A (mfsd4a) from Danio rerio (Zebrafish).